Reading from the N-terminus, the 436-residue chain is UPF0597 protein YhaM (436 aa).

The protein belongs to the UPF0597 family.

The polypeptide is UPF0597 protein YhaM (Escherichia coli O7:K1 (strain IAI39 / ExPEC)).